A 25-amino-acid chain; its full sequence is Ribosome-inactivating protein charantin (25 aa).

In terms of assembly, monomer.

It carries out the reaction Endohydrolysis of the N-glycosidic bond at one specific adenosine on the 28S rRNA.. In terms of biological role, inhibits cell-free translation in a rabbit reticulocyte lysate system. In Momordica charantia (Bitter gourd), this protein is Ribosome-inactivating protein charantin.